A 177-amino-acid polypeptide reads, in one-letter code: Isopentenyl-diphosphate Delta-isomerase (177 aa).

Histidine 22 and histidine 28 together coordinate Mn(2+). Positions 26 to 160 constitute a Nudix hydrolase domain; it reads LRHMAISVFV…PERFTPWLRI (135 aa). The active site involves cysteine 62. Histidine 64 contacts Mn(2+). Glutamate 82 is a binding site for Mg(2+). Mn(2+) contacts are provided by glutamate 108 and glutamate 110. Glutamate 110 is a catalytic residue.

Belongs to the IPP isomerase type 1 family. Mg(2+) is required as a cofactor. Mn(2+) serves as cofactor.

It is found in the cytoplasm. The catalysed reaction is isopentenyl diphosphate = dimethylallyl diphosphate. Its pathway is isoprenoid biosynthesis; dimethylallyl diphosphate biosynthesis; dimethylallyl diphosphate from isopentenyl diphosphate: step 1/1. It functions in the pathway porphyrin-containing compound metabolism; chlorophyll biosynthesis. Catalyzes the 1,3-allylic rearrangement of the homoallylic substrate isopentenyl (IPP) to its highly electrophilic allylic isomer, dimethylallyl diphosphate (DMAPP). The polypeptide is Isopentenyl-diphosphate Delta-isomerase (Cereibacter sphaeroides (strain ATCC 17029 / ATH 2.4.9) (Rhodobacter sphaeroides)).